A 519-amino-acid polypeptide reads, in one-letter code: Flavonoid 8-hydroxylase 2, chloroplastic (519 aa).

A chloroplast-targeting transit peptide spans 1-46 (MEVLQASSLSFQLLRRHSRNNLINKFRNPSLPRIHMPRQNIDLKTF). A Rieske domain is found at 77–188 (WYPVASVCDL…SCVRNGIVWF (112 aa)). [2Fe-2S] cluster-binding residues include Cys119, His121, Cys139, and His142. Residues His241 and His246 each coordinate Fe cation. Residues 447–450 (CSSC) carry the Redox-active motif motif. The next 2 membrane-spanning stretches (helical) occupy residues 462 to 478 (IGLQ…AAAV) and 485 to 501 (YSMV…SKWL).

[2Fe-2S] cluster serves as cofactor. As to expression, glandular trichome-specific expression in leaves.

Its subcellular location is the plastid. It is found in the chloroplast membrane. The protein resides in the cytoplasm. The enzyme catalyses salvigenin + 2 reduced [2Fe-2S]-[ferredoxin] + O2 + 2 H(+) = 8-hydroxysalvigenin + 2 oxidized [2Fe-2S]-[ferredoxin] + H2O. The protein operates within flavonoid metabolism. Its function is as follows. Rieske-type, PAO-family oxygenase involved in the biosynthesis of polymethoxylated flavonoids natural products such as nevadensin and salvigenin, aroma compounds which contribute to the flavor of sweet basil, and exhibit pharmacological activities such as anti-allergic, anti-oxidant, antibacterial, anti-proliferative, and anti-inflammatory effects. Catalyzes the hydroxylation of salvigenin to produce 8-hydroxysalvigenin (8-OH-SALV). This Ocimum basilicum (Sweet basil) protein is Flavonoid 8-hydroxylase 2, chloroplastic.